The chain runs to 529 residues: ATP synthase F(1) complex subunit beta, mitochondrial (529 aa).

The transit peptide at 1 to 47 (MLGFVGRVAAAPASGALRRLTPSASLPPAQLLLRAAPTAVHPVRDYA) directs the protein to the mitochondrion. Residue serine 106 is glycosylated (O-linked (GlcNAc) serine). Lysine 124, lysine 133, and lysine 161 each carry N6-acetyllysine; alternate. N6-succinyllysine; alternate is present on residues lysine 124, lysine 133, and lysine 161. Position 198 is an N6-acetyllysine (lysine 198). Residues glycine 209, valine 210, glycine 211, lysine 212, threonine 213, and valine 214 each contribute to the ADP site. Glycine 209 contributes to the ATP binding site. Phosphate contacts are provided by glycine 209, valine 210, glycine 211, lysine 212, and threonine 213. Positions 211, 212, 213, and 214 each coordinate ATP. Threonine 213 lines the Mg(2+) pocket. Glutamate 238 provides a ligand contact to Mg(2+). ATP is bound at residue arginine 239. Lysine 259 and lysine 264 each carry N6-acetyllysine; alternate. N6-succinyllysine; alternate is present on residues lysine 259 and lysine 264. Threonine 312 carries the phosphothreonine modification. The residue at position 415 (serine 415) is a Phosphoserine. Position 426 is an N6-acetyllysine (lysine 426). A Phosphoserine modification is found at serine 433. An N6-acetyllysine mark is found at lysine 480 and lysine 485. At lysine 522 the chain carries N6-acetyllysine; alternate. Lysine 522 bears the N6-succinyllysine; alternate mark. Serine 529 carries the post-translational modification Phosphoserine.

Belongs to the ATPase alpha/beta chains family. Homotrimer. Component of the ATP synthase complex composed at least of ATP5F1A/subunit alpha, ATP5F1B/subunit beta, ATP5MC1/subunit c (homooctomer), MT-ATP6/subunit a, MT-ATP8/subunit 8, ATP5ME/subunit e, ATP5MF/subunit f, ATP5MG/subunit g, ATP5MK/subunit k, ATP5MJ/subunit j, ATP5F1C/subunit gamma, ATP5F1D/subunit delta, ATP5F1E/subunit epsilon, ATP5PF/subunit F6, ATP5PB/subunit b, ATP5PD/subunit d, ATP5PO/subunit OSCP. ATP synthase complex consists of a soluble F(1) head domain (subunits alpha(3) and beta(3)) - the catalytic core - and a membrane F(0) domain - the membrane proton channel (subunits c, a, 8, e, f, g, k and j). These two domains are linked by a central stalk (subunits gamma, delta, and epsilon) rotating inside the F1 region and a stationary peripheral stalk (subunits F6, b, d, and OSCP). Interacts with PPIF. Interacts with BCL2L1 isoform BCL-X(L); the interaction mediates the association of BCL2L1 isoform BCL-X(L) with the mitochondrial membrane F(1)F(0) ATP synthase and enhances neurons metabolic efficiency. Interacts with CLN5 and PPT1. Interacts with S100A1; this interaction increases F1-ATPase activity. Interacts with MTLN. Interacts with TTC5/STRAP; the interaction results in decreased mitochondrial ATP production. Mg(2+) serves as cofactor.

It localises to the mitochondrion inner membrane. It carries out the reaction ATP + H2O + 4 H(+)(in) = ADP + phosphate + 5 H(+)(out). Catalytic subunit beta, of the mitochondrial membrane ATP synthase complex (F(1)F(0) ATP synthase or Complex V) that produces ATP from ADP in the presence of a proton gradient across the membrane which is generated by electron transport complexes of the respiratory chain. ATP synthase complex consist of a soluble F(1) head domain - the catalytic core - and a membrane F(1) domain - the membrane proton channel. These two domains are linked by a central stalk rotating inside the F(1) region and a stationary peripheral stalk. During catalysis, ATP synthesis in the catalytic domain of F(1) is coupled via a rotary mechanism of the central stalk subunits to proton translocation. In vivo, can only synthesize ATP although its ATP hydrolase activity can be activated artificially in vitro. With the subunit alpha (ATP5F1A), forms the catalytic core in the F(1) domain. The sequence is that of ATP synthase F(1) complex subunit beta, mitochondrial from Homo sapiens (Human).